Reading from the N-terminus, the 355-residue chain is Alanine racemase (355 aa).

The active-site Proton acceptor; specific for D-alanine is lysine 34. An N6-(pyridoxal phosphate)lysine modification is found at lysine 34. Residue arginine 133 participates in substrate binding. Residue tyrosine 249 is the Proton acceptor; specific for L-alanine of the active site. Methionine 297 is a substrate binding site.

It belongs to the alanine racemase family. It depends on pyridoxal 5'-phosphate as a cofactor.

The catalysed reaction is L-alanine = D-alanine. The protein operates within amino-acid biosynthesis; D-alanine biosynthesis; D-alanine from L-alanine: step 1/1. Catalyzes the interconversion of L-alanine and D-alanine. May also act on other amino acids. This Rickettsia conorii (strain ATCC VR-613 / Malish 7) protein is Alanine racemase (alr).